Here is a 272-residue protein sequence, read N- to C-terminus: MNLPFRAMVSDLDGTLLTPEHLVGDLTIDTLRALEQKGVDIILATGRNHTDVSSILGKIGAERAVMITSNGARVRDLQGNLLYSNSLPEELVLELYKTPFDTSKVCMNSYQDEGWFTNKDIPAMRQFHKESGFDYNVVDFSKHHGRGTEKVFFIGKTPEDLVEVETYLRDKFGDVTTIVYSALACLEVMNKNVSKGDALKHLLESREYELKDCIAFGDGMNDVEMLSWAGKGCIMKDADIRLKMACPELEVIGSNKEESVARYLRTQFGLDY.

Catalysis depends on D11, which acts as the Nucleophile. D11 contacts Mg(2+). A phosphate-binding site is contributed by L12. Residue D13 coordinates Mg(2+). Phosphate-binding positions include 45–46 (TG) and K195. D218 is a binding site for Mg(2+). Residue N221 coordinates phosphate.

Belongs to the HAD-like hydrolase superfamily. Cof family. It depends on Mg(2+) as a cofactor.

This is Putative phosphatase HI_0597 from Haemophilus influenzae (strain ATCC 51907 / DSM 11121 / KW20 / Rd).